Here is a 293-residue protein sequence, read N- to C-terminus: Ethanolamine ammonia-lyase small subunit (293 aa).

Residues Val207 and Glu228 each coordinate adenosylcob(III)alamin.

Belongs to the EutC family. In terms of assembly, the basic unit is a heterodimer which dimerizes to form tetramers. The heterotetramers trimerize; 6 large subunits form a core ring with 6 small subunits projecting outwards. Adenosylcob(III)alamin serves as cofactor.

The protein localises to the bacterial microcompartment. It catalyses the reaction ethanolamine = acetaldehyde + NH4(+). It participates in amine and polyamine degradation; ethanolamine degradation. Functionally, catalyzes the deamination of various vicinal amino-alcohols to oxo compounds. Allows this organism to utilize ethanolamine as the sole source of nitrogen and carbon in the presence of external vitamin B12. The sequence is that of Ethanolamine ammonia-lyase small subunit from Listeria monocytogenes serotype 4b (strain CLIP80459).